The chain runs to 505 residues: Trans-cinnamate 4-monooxygenase (505 aa).

Residues 3–23 (LLLLEKTLLALFIAATIAITI) traverse the membrane as a helical segment. (E)-cinnamate-binding positions include 212-217 (RSRLAQ) and Ala-305. Cys-446 contributes to the heme binding site.

It belongs to the cytochrome P450 family. Heme serves as cofactor.

Its subcellular location is the membrane. It catalyses the reaction (E)-cinnamate + reduced [NADPH--hemoprotein reductase] + O2 = (E)-4-coumarate + oxidized [NADPH--hemoprotein reductase] + H2O + H(+). It participates in phenylpropanoid metabolism; trans-4-coumarate biosynthesis; trans-4-coumarate from trans-cinnamate: step 1/1. Functionally, catalyzes the first oxidative step of the phenylpropanoid pathway in higher plants by transforming trans-cinnamate into p-coumarate. The compounds formed by this pathway are essential components for lignification, pollination, and defense against ultraviolet light, predators and pathogens. The sequence is that of Trans-cinnamate 4-monooxygenase (CYP73A19) from Cicer arietinum (Chickpea).